The chain runs to 1675 residues: Coadhesin (1675 aa).

Over 1-1356 the chain is Extracellular; that stretch reads QGNYYSYGGT…TIADQADAAK (1356 aa). The 150-residue stretch at 11-160 folds into the F5/8 type C 1 domain; the sequence is TPGTPIGCTN…ICMRVGVESC (150 aa). 7 TSP type-1 domains span residues 168–220, 224–279, 281–336, 338–393, 403–458, 460–515, and 517–572; these read NGAW…NDCV, NGGW…QFCP, DGGW…QCCP, HGGW…QTCP, NGNY…IPCP, NGNW…TACP, and DGGW…GPCP. Disulfide bonds link cysteine 180/cysteine 216, cysteine 184/cysteine 219, cysteine 194/cysteine 206, cysteine 236/cysteine 273, cysteine 240/cysteine 278, cysteine 251/cysteine 263, cysteine 293/cysteine 330, cysteine 297/cysteine 335, cysteine 308/cysteine 320, cysteine 350/cysteine 387, cysteine 354/cysteine 392, cysteine 365/cysteine 377, cysteine 415/cysteine 452, cysteine 419/cysteine 457, cysteine 430/cysteine 442, cysteine 472/cysteine 509, cysteine 476/cysteine 514, cysteine 487/cysteine 499, cysteine 528/cysteine 566, cysteine 532/cysteine 571, and cysteine 543/cysteine 555. A disordered region spans residues 567-588; the sequence is NKGPCPTSPPTISPPTTGSPAD. VWFA domains are found at residues 595–769, 778–958, and 966–1141; these read DLVF…MDRI, DIGF…FKAL, and DLTF…ISII. In terms of domain architecture, TSP type-1 8 spans 1144–1198; sequence PSGLSKWSSWSACSKTCRYLGKAGTQIRTRDCKIPELGCDGMRIDTVECNKMDCE. 3 disulfide bridges follow: cysteine 1156–cysteine 1192, cysteine 1160–cysteine 1197, and cysteine 1175–cysteine 1182. One can recognise an F5/8 type C 2 domain in the interval 1192–1336; it reads CNKMDCEGCG…PCMQAAVFGC (145 aa). Residues 1357–1377 traverse the membrane as a helical segment; that stretch reads GILIVLWILAGILTFLLLMAC. The Cytoplasmic portion of the chain corresponds to 1378–1675; that stretch reads CYYCCWHVCC…RGEEWYSRWG (298 aa). The segment covering 1463–1480 has biased composition (basic and acidic residues); that stretch reads EKHVTAEDVKSEKPKYSE. The segment at 1463–1491 is disordered; it reads EKHVTAEDVKSEKPKYSEEASSGTIKSGS. The span at 1481–1491 shows a compositional bias: polar residues; sequence EASSGTIKSGS.

Component of the acid-insoluble and acid-soluble organic matrix of the aragonitic skeleton (at protein level).

Its subcellular location is the membrane. This is Coadhesin from Acropora millepora (Staghorn coral).